The chain runs to 255 residues: MKVDLNSDLGESFGRYKLGLDEEVMKYITSANVATGWHAGDPLVMRKTVRLAKEKGVAVGAHPGYPDLLGFGRRYMKLTPEEARNYILYQIGALHAFTKAEGMELQHVKPHGALYNALVKDEELARAVIEGITDFDRRIIFVMLSGSRPAEIAEEMGLKVAHEVFADRAYNPDGTLVLRGKPGAVIHDKELIAERVVSMVKDGGVKAINGEWIELRADTICVHGDNPKAVEIAAYIRRVLEDEGINVVPMGEFIR.

The protein belongs to the LamB/PxpA family. Forms a complex composed of PxpA, PxpB and PxpC.

It carries out the reaction 5-oxo-L-proline + ATP + 2 H2O = L-glutamate + ADP + phosphate + H(+). In terms of biological role, catalyzes the cleavage of 5-oxoproline to form L-glutamate coupled to the hydrolysis of ATP to ADP and inorganic phosphate. The protein is 5-oxoprolinase subunit A of Thermococcus onnurineus (strain NA1).